Consider the following 510-residue polypeptide: NAD(P)H-quinone oxidoreductase subunit 2 B, chloroplastic (510 aa).

The next 13 helical transmembrane spans lie at 24-44 (LLLF…GLIL), 57-77 (IPWL…ALLF), 99-119 (IFQF…VEYI), 124-144 (MAIA…MFLC), 149-169 (LITI…LSGY), 183-203 (YLLM…WLYG), 227-247 (PGIS…LSPA), 295-315 (WHLL…LIAI), 323-343 (MLAY…IVGN), 354-374 (YMLF…LFGL), 395-415 (ALSL…AGFF), 418-438 (LHLF…IGLL), and 484-504 (MIVC…IIAI).

The protein belongs to the complex I subunit 2 family. NDH is composed of at least 16 different subunits, 5 of which are encoded in the nucleus.

It localises to the plastid. It is found in the chloroplast thylakoid membrane. The enzyme catalyses a plastoquinone + NADH + (n+1) H(+)(in) = a plastoquinol + NAD(+) + n H(+)(out). It carries out the reaction a plastoquinone + NADPH + (n+1) H(+)(in) = a plastoquinol + NADP(+) + n H(+)(out). Its function is as follows. NDH shuttles electrons from NAD(P)H:plastoquinone, via FMN and iron-sulfur (Fe-S) centers, to quinones in the photosynthetic chain and possibly in a chloroplast respiratory chain. The immediate electron acceptor for the enzyme in this species is believed to be plastoquinone. Couples the redox reaction to proton translocation, and thus conserves the redox energy in a proton gradient. The chain is NAD(P)H-quinone oxidoreductase subunit 2 B, chloroplastic from Gossypium barbadense (Sea Island cotton).